The following is a 134-amino-acid chain: Small ribosomal subunit protein bS16 (134 aa).

The interval 79–134 is disordered; the sequence is AGIAKRPSRNNPTKGEPGKKAQERLALAKQAEEEASAKAAEAAAAAAAPAEEAASE. Over residues 115–134 the composition is skewed to low complexity; sequence AKAAEAAAAAAAPAEEAASE.

Belongs to the bacterial ribosomal protein bS16 family.

The polypeptide is Small ribosomal subunit protein bS16 (Brucella abortus (strain S19)).